We begin with the raw amino-acid sequence, 351 residues long: Protein-glutamate methylesterase/protein-glutamine glutaminase 2 (351 aa).

A Response regulatory domain is found at 4-121 (KVLVVDDSAL…PQDFNEYQDL (118 aa)). Aspartate 55 carries the 4-aspartylphosphate modification. Residues 156 to 348 (RVINTQLVAI…DKMLNYLASL (193 aa)) enclose the CheB-type methylesterase domain. Catalysis depends on residues serine 168, histidine 194, and aspartate 290.

This sequence belongs to the CheB family. In terms of processing, phosphorylated by CheA. Phosphorylation of the N-terminal regulatory domain activates the methylesterase activity.

It is found in the cytoplasm. It catalyses the reaction [protein]-L-glutamate 5-O-methyl ester + H2O = L-glutamyl-[protein] + methanol + H(+). It carries out the reaction L-glutaminyl-[protein] + H2O = L-glutamyl-[protein] + NH4(+). Involved in chemotaxis. Part of a chemotaxis signal transduction system that modulates chemotaxis in response to various stimuli. Catalyzes the demethylation of specific methylglutamate residues introduced into the chemoreceptors (methyl-accepting chemotaxis proteins or MCP) by CheR. Also mediates the irreversible deamidation of specific glutamine residues to glutamic acid. The chain is Protein-glutamate methylesterase/protein-glutamine glutaminase 2 from Shewanella sp. (strain MR-7).